The chain runs to 540 residues: MLO protein homolog 1 (540 aa).

Topologically, residues 1-16 are extracellular; it reads MAGGRSGSRELPETPT. Residues 17–37 form a helical membrane-spanning segment; the sequence is WAVAVVCAVLVLVSVAMEHGL. At 38–60 the chain is on the cytoplasmic side; sequence HNLSHWFRRRQKKAMGDALDKIK. A helical membrane pass occupies residues 61–81; sequence AELMLLGFISLLLTVAQAPIS. Topologically, residues 82 to 142 are extracellular; that stretch reads KICIPKSAAN…MSAKSMHQLH (61 aa). A helical transmembrane segment spans residues 143–163; sequence IFIFVLAVFHVTYCVITMGLG. At 164–265 the chain is on the cytoplasmic side; the sequence is RLKMKKWKKW…IKRSLEDDFK (102 aa). Residues 266–286 form a helical membrane-spanning segment; it reads VVVGISLPLWFVGILVLFLDI. Position 287 (His287) is a topological domain, extracellular. A helical membrane pass occupies residues 288-308; sequence GLGTLIWISFVPLIIVLLVGT. Residues 309–347 lie on the Cytoplasmic side of the membrane; the sequence is KLEMVIMQMAQEIQDRATVIQGAPVVEPSNKYFWFNRPD. A helical membrane pass occupies residues 348–368; that stretch reads WVLFFIHLTLFHNAFQMAHFV. Residues 369–383 are Extracellular-facing; the sequence is WTMATPGLKKCFHEN. Residues 384-404 form a helical membrane-spanning segment; sequence IWLSIVEVIVGISLQVLCSYI. Topologically, residues 405–540 are cytoplasmic; the sequence is TFPLYALVTQ…DSDFSFSAQR (136 aa). Residues 426–447 are calmodulin-binding; sequence EQTMKALMNWRKKAMEKKKVRD. A disordered region spans residues 468–526; that stretch reads ASPVHLLQDHRARSDDPPSPITVASPPAPEEDIYPVPAAAASRQLLDDPPDRRWMASSS. Composition is skewed to basic and acidic residues over residues 474–483 and 512–521; these read LQDHRARSDD and LLDDPPDRRW.

This sequence belongs to the MLO family.

The protein resides in the membrane. In terms of biological role, may be involved in modulation of pathogen defense and leaf cell death. Activity seems to be regulated by Ca(2+)-dependent calmodulin binding and seems not to require heterotrimeric G proteins. This is MLO protein homolog 1 (MLO1) from Oryza sativa subsp. japonica (Rice).